Here is a 430-residue protein sequence, read N- to C-terminus: Vitamin B6 salvage pathway transcriptional repressor PtsJ (430 aa).

In terms of domain architecture, HTH gntR-type spans 4 to 72 (GKTANEIFDS…GRNGTVIKGS (69 aa)). The H-T-H motif DNA-binding region spans 32 to 51 (VRELASELKVNRNTVAAAYK). Residues 70–95 (KGSPSPVALEGGDPHTPLHDLSGGNP) are disordered. K282 is modified (N6-(pyridoxal phosphate)lysine).

In the C-terminal section; belongs to the class-I pyridoxal-phosphate-dependent aminotransferase family. As to quaternary structure, homodimer in both apo- and holo-forms.

Its function is as follows. Acts as a transcriptional repressor of the pdxK gene, encoding a pyridoxal kinase involved in the vitamin B6 salvage pathway. Also represses transcription of its own gene. Binds to the ptsJ-pdxK intergenic region, but does not bind pdxY and pdxH promoters. Among all six B6 vitamers, only pyridoxal 5'-phosphate (PLP) clearly binds to the protein and acts as an effector molecule for PtsJ, inducing a protein conformational change that increases affinity for DNA. Thus, PLP stabilizes protein-DNA interactions, reinforcing repression. This chain is Vitamin B6 salvage pathway transcriptional repressor PtsJ, found in Salmonella typhimurium (strain LT2 / SGSC1412 / ATCC 700720).